The primary structure comprises 923 residues: DNA mismatch repair protein PMS1 (923 aa).

Composition is skewed to basic and acidic residues over residues 543–553, 565–581, and 591–601; these read DMTPSERDSEL, NVER…RFEE, and GDVERVSEDNP. The tract at residues 543–603 is disordered; sequence DMTPSERDSE…ERVSEDNPRC (61 aa).

This sequence belongs to the DNA mismatch repair MutL/HexB family. As to quaternary structure, heterodimer of MLH1 and PMS1, called MutLalpha, which is the major MMR MutL activity correcting base-base mismatches as well as IDLs. The heterodimer binds double strand DNA independently of a mismatch with positive cooperativity and has more than one DNA binding site. Forms a ternary complex with either the MSH2-MSH6 (MutSalpha) or the MSH2-MSH3 heterodimer (MutSbeta), which recognize and bind to mismatch DNA. Ternary complex formation is promoted by ATP binding. In terms of tissue distribution, expressed at very low levels in mature leaves. Detected in rapidly dividing tissues.

The protein localises to the nucleus. Functionally, required for DNA mismatch repair (MMR), correcting base-base mismatches and insertion-deletion loops (IDLs) resulting from DNA replication, DNA damage or from recombination events between non-identical sequences during meiosis. Component of the MutLalpha heterodimer that forms a ternary complex with the MutS heterodimers, which initially recognize the DNA mismatches. This complex is thought to be responsible for directing the downstream MMR events, including strand discrimination, excision, and resynthesis. Plays a major role in maintaining the genetic stability of simple sequence repeats and in the repair of heteroduplex sites present in meiotic recombination intermediates. Does not seem to be required for homologous somatic recombination. The polypeptide is DNA mismatch repair protein PMS1 (PMS1) (Arabidopsis thaliana (Mouse-ear cress)).